A 2768-amino-acid chain; its full sequence is Thyroglobulin (2768 aa).

The first 19 residues, 1–19, serve as a signal peptide directing secretion; the sequence is MALVLEIFTLLASICWVSA. Tyr24 is subject to Iodotyrosine; alternate. Tyr24 carries the post-translational modification Sulfotyrosine; alternate. Tyr24 carries the post-translational modification Thyroxine; alternate. Residue Tyr24 is modified to Triiodothyronine; alternate. 4 consecutive Thyroglobulin type-1 domains span residues 31–92, 93–160, 161–297, and 298–358; these read LRPC…PVAC, LSFC…PKRC, PRSC…RFRC, and PTKC…PPSC. 18 disulfides stabilise this stretch: Cys34–Cys52, Cys63–Cys70, Cys72–Cys92, Cys96–Cys120, Cys131–Cys138, Cys140–Cys160, Cys164–Cys183, Cys194–Cys235, Cys237–Cys297, Cys301–Cys319, Cys330–Cys336, Cys338–Cys358, Cys364–Cys620, Cys408–Cys608, Cys631–Cys636, Cys638–Cys658, Cys662–Cys687, and Cys698–Cys703. Residue Asn76 is glycosylated (N-linked (GlcNAc...) asparagine). Tyr108 is subject to Iodotyrosine. Asn110 carries an N-linked (GlcNAc...) asparagine glycan. Tyr149 is modified (iodotyrosine; alternate). Tyr149 is modified (diiodotyrosine; alternate). Asn198 carries N-linked (GlcNAc...) asparagine glycosylation. Tyr234 and Tyr258 each carry iodotyrosine. 2 N-linked (GlcNAc...) asparagine glycosylation sites follow: Asn484 and Asn529. Residues 521–545 form a disordered region; that stretch reads PLSVGLDSNSSTGTPEAAKKDGTMN. Thyroglobulin type-1 domains are found at residues 605-658, 659-726, 727-921, 922-1073, 1074-1145, and 1146-1210; these read SQTC…QPRC, PTDC…PKKC, PTPC…LPTC, PGSC…IPQC, PTTC…SAQC, and PSLC…QPAC. Residue Tyr704 is modified to Iodotyrosine; alternate. Tyr704 is modified (thyroxine; alternate). Tyr704 carries the post-translational modification Triiodothyronine; alternate. Position 704 is a diiodotyrosine; alternate (Tyr704). Intrachain disulfides connect Cys705/Cys726, Cys730/Cys763, Cys774/Cys898, Cys900/Cys921, Cys925/Cys1031, Cys1042/Cys1049, Cys1051/Cys1073, Cys1077/Cys1108, Cys1126/Cys1145, Cys1149/Cys1169, Cys1181/Cys1188, Cys1190/Cys1210, Cys1215/Cys1264, Cys1231/Cys1245, Cys1306/Cys1356, and Cys1331/Cys1347. An N-linked (GlcNAc...) asparagine glycan is attached at Asn748. At Tyr785 the chain carries Iodotyrosine. N-linked (GlcNAc...) asparagine glycosylation is present at Asn816. The residue at position 866 (Tyr866) is an Iodotyrosine; alternate. At Tyr866 the chain carries Diiodotyrosine; alternate. Tyr883 is modified (diiodotyrosine). An N-linked (GlcNAc...) asparagine glycan is attached at Asn947. Tyr992 is subject to Iodotyrosine; alternate. Tyr992 bears the Diiodotyrosine; alternate mark. Asn1220 carries N-linked (GlcNAc...) asparagine glycosylation. Tyr1310 is subject to Iodotyrosine. A Thyroxine modification is found at Tyr1310. 3 N-linked (GlcNAc...) asparagine glycosylation sites follow: Asn1348, Asn1349, and Asn1365. Intrachain disulfides connect Cys1440–Cys1459, Cys1462–Cys1473, Cys1476–Cys1490, Cys1493–Cys1510, Cys1514–Cys1523, Cys1543–Cys1565, Cys1603–Cys1627, Cys1607–Cys1613, and Cys1639–Cys1662. 3 Type II repeats span residues 1456–1469, 1470–1486, and 1487–1503; these read GLGCVKCPEGSYSQ, DEECIPCPVGFYQEQAG, and SLACVPCPVGRTTISAG. At Tyr1467 the chain carries Iodotyrosine; alternate. Diiodotyrosine; alternate is present on Tyr1467. The Thyroglobulin type-1 11 domain maps to 1511–1565; sequence VTDCQRNEAGLQCDQNGQYRASQKDRGSGKAFCVDGEGRRLPWWETEAPLEDSQC. The Type IIIA repeat unit spans residues 1603-1723; that stretch reads CLTDCTEDEA…GANLTDAHLF (121 aa). N-linked (GlcNAc...) asparagine glycosylation is present at Asn1716. Cystine bridges form between Cys1724–Cys1749, Cys1728–Cys1734, Cys1733–Cys1835, and Cys1760–Cys1777. One copy of the Type IIIB repeat lies at 1724 to 1892; it reads CLLACDRDLC…LFSAQQANLW (169 aa). N-linked (GlcNAc...) asparagine glycosylation is found at Asn1774 and Asn1869. 7 disulfides stabilise this stretch: Cys1893-Cys1919, Cys1897-Cys1904, Cys1928-Cys1939, Cys1996-Cys2024, Cys2000-Cys2006, Cys2005-Cys2076, and Cys2035-Cys2048. One copy of the Type IIIA repeat lies at 1893–1995; that stretch reads CLSRCVQEHS…EKSISNGFFE (103 aa). The stretch at 1996 to 2129 is one Type IIIB repeat; it reads CERRCDADPC…TSNFSAVRDL (134 aa). Asn2013 carries an N-linked (GlcNAc...) asparagine glycan. Asn2122 is a glycosylation site (N-linked (GlcNAc...) asparagine). Cystine bridges form between Cys2130-Cys2154, Cys2134-Cys2140, and Cys2163-Cys2172. The Type IIIA repeat unit spans residues 2130 to 2187; sequence CLSECSQHEACLITTLQTQPGAVRCMFYADTQSCTHSLQGQNCRLLLREEATHIYRKP. Iodotyrosine is present on Tyr2184. Positions 2188 to 2768 are cholinesterase-like (ChEL); that stretch reads GISLLSYEAS…QEPGSKTYSK (581 aa). N-linked (GlcNAc...) asparagine glycosylation is present at Asn2250. Cys2264 and Cys2281 are disulfide-bonded. Residue Asn2295 is glycosylated (N-linked (GlcNAc...) asparagine). Cys2442 and Cys2453 are oxidised to a cystine. Position 2540 is an iodotyrosine (Tyr2540). Tyr2573 carries the post-translational modification Iodotyrosine; alternate. The residue at position 2573 (Tyr2573) is a Thyroxine; alternate. Tyr2573 bears the Triiodothyronine; alternate mark. Diiodotyrosine; alternate is present on Tyr2573. The N-linked (GlcNAc...) asparagine glycan is linked to Asn2582. Residues Tyr2587 and Tyr2617 each carry the iodotyrosine modification. Cysteines 2591 and 2715 form a disulfide. Residue Tyr2697 is modified to Diiodotyrosine. A disordered region spans residues 2727-2768; sequence TSADGAKGGQSAESEEEELTAGSGLREDLLSLQEPGSKTYSK. A glycan (O-linked (Xyl...) (chondroitin sulfate) serine) is linked at Ser2749. Iodotyrosine; alternate is present on Tyr2766. Tyr2766 is modified (thyroxine; alternate). Residue Tyr2766 is modified to Triiodothyronine; alternate. Position 2766 is a diiodotyrosine; alternate (Tyr2766).

This sequence belongs to the type-B carboxylesterase/lipase family. In terms of assembly, monomer. Homodimer (via ChEL region); occurs in the endoplasmic reticulum and is required for export to the Golgi apparatus. Homooligomer; disulfide-linked; stored in this form in the thyroid follicle lumen. In terms of processing, iodinated on tyrosine residues by TPO. There are 4 pairs of iodinated tyrosines used for coupling: acceptor Tyr-24 is coupled to donor Tyr-149 or Tyr-234, acceptor Tyr-2573 is coupled to donor Tyr-2540, acceptor Tyr-2766 in monomer 1 is coupled to donor Tyr-2766 in monomer 2 and acceptor Tyr-1310 in monomer 1 is coupled to donor Tyr-108 in monomer 2. Post-translationally, sulfated tyrosines are desulfated during iodination. Undergoes sequential proteolysis by cathepsins to release thyroxine (T4) and triiodothyronine (T3) hormones. In the thyroid follicle lumen, cross-linked TG (storage form) is solubilized by limited proteolysis mediated by cathepsins CTSB and/or CTSL. Partially cleaved TG is further processed by CTSK/cathepsin K and/or CTSL resulting in the release of T4. Following endocytosis, further processing occurs leading to the release of T3 and more T4 hormones. In terms of tissue distribution, specifically expressed in the thyroid gland.

It localises to the secreted. In terms of biological role, acts as a substrate for the production of iodinated thyroid hormones thyroxine (T4) and triiodothyronine (T3). The synthesis of T3 and T4 involves iodination of selected tyrosine residues of TG/thyroglobulin followed by their oxidative coupling in the thyroid follicle lumen. Following TG re-internalization and lysosomal-mediated proteolysis, T3 and T4 are released from the polypeptide backbone leading to their secretion into the bloodstream. One dimer produces 7 thyroid hormone molecules. This chain is Thyroglobulin, found in Homo sapiens (Human).